The following is a 1693-amino-acid chain: uncharacterized protein (1693 aa).

16 WD repeats span residues 1008 to 1042 (HHEGPVTVLRISPSMENTPPLVLTATTNGIAYLWS), 1053 to 1083 (GHQEAITALDWSADGQYFATASADHTVKLWQ), 1094 to 1124 (GHEDWVRSVHFSPHHQFLVTSGQDNTARIWN), 1135 to 1165 (GHADWVRNAEFNCHGQILLTASRDGTARLWD), 1176 to 1206 (GHTSWVRNAQFSPDGQWIVTCSADGTARLWD), 1217 to 1247 (GHQNWVNNALWSPDGQHIITSSSDGTARVWS), 1258 to 1288 (GHDHNIHGARFSLDGQKIVTYSTDNTARLWT), 1299 to 1329 (GHQKEVYDADFSADGRFVFTVSADQTARQWD), 1340 to 1370 (GHSHWVRNAHFNPKGDRLLTVSRDKTARLWT), 1381 to 1411 (DHQGWVREGQFSPDGQWIVTGSADKTAQLWN), 1422 to 1452 (GHQDAVLNVRFSPDSQYIVTASKDGTARVWN), 1463 to 1493 (HYEKNIFAAEFSADGQFIVTASDDNTAGIWE), 1504 to 1534 (GHEGPVYFAQFSADSRYILTASVDNTARIWD), 1545 to 1575 (GHQSIVYQARFSPEGNLIATVSADHTARLWD), 1586 to 1616 (GHQGLVGTVDWSPDGQMLVTASNDGTARLWD), and 1627 to 1657 (GHGNWVRSAEFSPDGRWVLTSSADGTAKLWP).

This is an uncharacterized protein from Synechocystis sp. (strain ATCC 27184 / PCC 6803 / Kazusa).